The sequence spans 141 residues: Hemoglobin subunit alpha-D (141 aa).

Residues 1 to 141 (MLTEDEKQLI…VSAVLAEKYR (141 aa)) enclose the Globin domain. Residues histidine 58 and histidine 87 each coordinate heme b.

It belongs to the globin family. As to quaternary structure, heterotetramer of two alpha-D chains and two beta chains. Red blood cells.

In terms of biological role, involved in oxygen transport from the lung to the various peripheral tissues. The protein is Hemoglobin subunit alpha-D (HBAD) of Chelonoidis carbonarius (Red-footed tortoise).